Here is a 549-residue protein sequence, read N- to C-terminus: Zinc finger protein 18 (549 aa).

Positions 41–123 constitute an SCAN box domain; sequence RQLFRQFRYQ…TLVESLKGDP (83 aa). The KRAB domain occupies 211–283; the sequence is DLGASLLPAA…YLHVNEKIPR (73 aa). C2H2-type zinc fingers lie at residues 408–430, 436–458, 464–486, 492–514, and 520–542; these read PTCR…QRTH, FQCT…QRTH, CKCD…EKIH, YKCP…QRVH, and YKCS…QRSH.

It belongs to the krueppel C2H2-type zinc-finger protein family.

The protein resides in the nucleus. May be involved in transcriptional regulation. This is Zinc finger protein 18 (ZNF18) from Homo sapiens (Human).